Here is a 138-residue protein sequence, read N- to C-terminus: MRLTQGTFSFLPDLTDEQISKQLTYIVSKGLSANVEYTDDPHPRNSYWELWGLPLFDVKDASAVMYEISSCRKAKPNYYIKVNAFDNTRGIESCVMSFIVNRPINEPGFLLQRQDFEGRTMKYSLHSYATEKPEGARY.

Belongs to the RuBisCO small chain family. In terms of assembly, heterohexadecamer of 8 large and 8 small subunits.

It localises to the plastid. The protein resides in the chloroplast. RuBisCO catalyzes two reactions: the carboxylation of D-ribulose 1,5-bisphosphate, the primary event in carbon dioxide fixation, as well as the oxidative fragmentation of the pentose substrate in the photorespiration process. Both reactions occur simultaneously and in competition at the same active site. Although the small subunit is not catalytic it is essential for maximal activity. This Pyropia suborbiculata (Red alga) protein is Ribulose bisphosphate carboxylase small subunit.